Reading from the N-terminus, the 203-residue chain is Probable nicotinate-nucleotide adenylyltransferase (203 aa).

Belongs to the NadD family.

It carries out the reaction nicotinate beta-D-ribonucleotide + ATP + H(+) = deamido-NAD(+) + diphosphate. It functions in the pathway cofactor biosynthesis; NAD(+) biosynthesis; deamido-NAD(+) from nicotinate D-ribonucleotide: step 1/1. In terms of biological role, catalyzes the reversible adenylation of nicotinate mononucleotide (NaMN) to nicotinic acid adenine dinucleotide (NaAD). In Prosthecochloris aestuarii (strain DSM 271 / SK 413), this protein is Probable nicotinate-nucleotide adenylyltransferase.